The chain runs to 317 residues: Exopolysaccharide production protein ExoZ (317 aa).

The next 7 helical transmembrane spans lie at 14–34, 53–73, 100–120, 132–152, 185–205, 206–226, and 268–288; these read TIGA…MWVI, IVPV…AGLF, IWPV…YAVF, LPVV…VAFD, LAVG…IGVL, GLPF…IGVL, and IGLG…LIGI.

Belongs to the acyltransferase 3 family.

It is found in the cell membrane. Functionally, required for the acetyl modification of the third sugar (glucose) of the octasaccharide subunit of succinoglycan (EPS I). The polypeptide is Exopolysaccharide production protein ExoZ (exoZ) (Rhizobium meliloti (strain 1021) (Ensifer meliloti)).